The sequence spans 529 residues: Listeriolysin O (529 aa).

A signal peptide spans 1–24 (MKKIMLVFITLILVSLPIAQQTEA). The next 4 beta stranded transmembrane spans lie at 214–227 (ESQL…AFKA), 234–243 (VNFGAISEGK), 312–321 (STKVKAAFDA), and 329–341 (SGDV…IKNS). The Conserved undecapeptide signature appears at 483–493 (ECTGLAWEWWR). The Cholesterol binding signature appears at 515 to 516 (TL).

It belongs to the cholesterol-dependent cytolysin family. Homooligomeric pore complex of 35 to 50 subunits; when inserted in the host membrane.

It is found in the secreted. It localises to the host membrane. The protein resides in the host cell membrane. With respect to regulation, activity of listeriolysin O is regulated on multiple levels. It should be high in the phagosome, thereby allowing escape of the bacteria from the phagosomal compartment. Then, once inside the host cytosol, the activity must be controlled to prevent lysis of the host plasma membrane and loss of the intracellular environment. In terms of biological role, a cholesterol-dependent toxin that causes cytolysis by forming pores in cholesterol containing host membranes. After binding to target membranes, the protein undergoes a major conformation change, leading to its insertion in the host membrane and formation of an oligomeric pore complex. Cholesterol is required for binding to host membranes, membrane insertion and pore formation; cholesterol binding is mediated by a Thr-Leu pair in the C-terminus. Acts as a major virulence factor required for the escape of bacteria from phagosomal vacuoles and entry into the host cytosol. Can be reversibly inactivated by oxidation. This chain is Listeriolysin O (hly), found in Listeria monocytogenes serotype 4b (strain F2365).